We begin with the raw amino-acid sequence, 123 residues long: Large ribosomal subunit protein bL12 (123 aa).

Residues 98 to 123 (KEGVSKEEAEEIKSKLEDAGATVELK) form a disordered region. Basic and acidic residues predominate over residues 100–115 (GVSKEEAEEIKSKLED).

This sequence belongs to the bacterial ribosomal protein bL12 family. In terms of assembly, homodimer. Part of the ribosomal stalk of the 50S ribosomal subunit. Forms a multimeric L10(L12)X complex, where L10 forms an elongated spine to which 2 to 4 L12 dimers bind in a sequential fashion. Binds GTP-bound translation factors.

In terms of biological role, forms part of the ribosomal stalk which helps the ribosome interact with GTP-bound translation factors. Is thus essential for accurate translation. In Halothermothrix orenii (strain H 168 / OCM 544 / DSM 9562), this protein is Large ribosomal subunit protein bL12.